A 932-amino-acid polypeptide reads, in one-letter code: Receptor-like protein 9a (932 aa).

The N-terminal stretch at Met-1–Cys-28 is a signal peptide. Over Ile-29 to Thr-888 the chain is Extracellular. Residues Asn-53, Asn-80, and Asn-90 are each glycosylated (N-linked (GlcNAc...) asparagine). LRR repeat units follow at residues Phe-97–Ser-122, Leu-126–Ser-152, Arg-154–Asp-174, Leu-175–Lys-200, His-202–Gln-222, Leu-223–Ser-246, Leu-247–Ser-273, Glu-275–Asn-295, Leu-296–Gln-320, Lys-322–Gln-345, Lys-346–Glu-368, Tyr-370–Val-393, His-394–Val-417, Leu-418–Glu-441, Lys-443–Gly-466, Ser-468–Leu-491, Glu-492–Ser-514, Gly-516–Phe-535, Gly-536–Asn-560, Val-561–Phe-583, His-585–Leu-605, Glu-606–Arg-629, Phe-631–Leu-652, Lys-653–Val-676, Phe-745–Phe-769, Gln-770–Asn-792, Thr-794–Leu-817, and Tyr-819–Ser-842. Asn-140 carries an N-linked (GlcNAc...) asparagine glycan. 2 N-linked (GlcNAc...) asparagine glycosylation sites follow: Asn-261 and Asn-295. 2 N-linked (GlcNAc...) asparagine glycosylation sites follow: Asn-352 and Asn-380. Asn-420, Asn-425, and Asn-454 each carry an N-linked (GlcNAc...) asparagine glycan. N-linked (GlcNAc...) asparagine glycans are attached at residues Asn-524, Asn-551, and Asn-560. Residues Asn-666 and Asn-675 are each glycosylated (N-linked (GlcNAc...) asparagine). N-linked (GlcNAc...) asparagine glycosylation is found at Asn-776 and Asn-792. N-linked (GlcNAc...) asparagine glycans are attached at residues Asn-824, Asn-829, Asn-860, and Asn-866. A helical membrane pass occupies residues Phe-889–Cys-909. Over Phe-910–Val-932 the chain is Cytoplasmic.

It belongs to the RLP family.

The protein resides in the cell membrane. In Arabidopsis thaliana (Mouse-ear cress), this protein is Receptor-like protein 9a.